Consider the following 313-residue polypeptide: Ornithine carbamoyltransferase (313 aa).

Residues 57–60 (STRT), R108, and 135–138 (HPTQ) each bind carbamoyl phosphate. L-ornithine contacts are provided by residues N167, D231, and 235 to 236 (SM). Carbamoyl phosphate contacts are provided by residues 272 to 273 (CL) and R300.

It belongs to the aspartate/ornithine carbamoyltransferase superfamily. OTCase family.

It localises to the cytoplasm. It carries out the reaction carbamoyl phosphate + L-ornithine = L-citrulline + phosphate + H(+). It participates in amino-acid biosynthesis; L-arginine biosynthesis; L-arginine from L-ornithine and carbamoyl phosphate: step 1/3. Reversibly catalyzes the transfer of the carbamoyl group from carbamoyl phosphate (CP) to the N(epsilon) atom of ornithine (ORN) to produce L-citrulline. This is Ornithine carbamoyltransferase from Thermotoga petrophila (strain ATCC BAA-488 / DSM 13995 / JCM 10881 / RKU-1).